A 229-amino-acid chain; its full sequence is Large ribosomal subunit protein uL1 (229 aa).

The protein belongs to the universal ribosomal protein uL1 family. Part of the 50S ribosomal subunit.

In terms of biological role, binds directly to 23S rRNA. The L1 stalk is quite mobile in the ribosome, and is involved in E site tRNA release. Its function is as follows. Protein L1 is also a translational repressor protein, it controls the translation of the L11 operon by binding to its mRNA. This is Large ribosomal subunit protein uL1 from Streptococcus gordonii (strain Challis / ATCC 35105 / BCRC 15272 / CH1 / DL1 / V288).